The chain runs to 239 residues: Probable transcriptional regulatory protein RBAM_007230 (239 aa).

Belongs to the TACO1 family. YeeN subfamily.

Its subcellular location is the cytoplasm. The protein is Probable transcriptional regulatory protein RBAM_007230 of Bacillus velezensis (strain DSM 23117 / BGSC 10A6 / LMG 26770 / FZB42) (Bacillus amyloliquefaciens subsp. plantarum).